The primary structure comprises 601 residues: Nuclear envelope protein ndc1 (601 aa).

At 1–34 (MVMLRTSFPSGSRTKAVRYHTLLRPILQQRFLRA) the chain is on the cytoplasmic side. The chain crosses the membrane as a helical span at residues 35 to 55 (CFALLCLCCITSYWFSSGPFI). At 56 to 58 (SLS) the chain is on the perinuclear space side. A helical membrane pass occupies residues 59–79 (FWFLSLVRGFVCFFFMFPYFV). The Cytoplasmic segment spans residues 80 to 106 (MLKSRMSTQKVTKQSLGAQLFYDFSPK). Residues 107-127 (SFFLVYLTFAVSVSCLCLFYI) traverse the membrane as a helical segment. Over 128 to 153 (KGHASSIRLQWIASPNAYELPSLNER) the chain is Perinuclear space. Residues 154 to 174 (FVYMTYFSHILILALTVEHLY) traverse the membrane as a helical segment. At 175 to 182 (LQRDSPSR) the chain is on the cytoplasmic side. Residues 183–203 (PVINVSFFNYIFQNLGWLIRF) traverse the membrane as a helical segment. At 204 to 256 (SFRKSIICCLFTPFSYAILRSYIWRFAALLTSCCRRIAYTKTPPKWPLSLRLL) the chain is on the perinuclear space side. Residues 257-277 (LHSFWMAFIVCLTFQIALLIF) traverse the membrane as a helical segment. The Cytoplasmic portion of the chain corresponds to 278-601 (RVFLYSGPMI…VLFREYKSNS (324 aa)).

Belongs to the NDC1 family. Component of the nuclear pore complex (NPC). NPC constitutes the exclusive means of nucleocytoplasmic transport. NPCs allow the passive diffusion of ions and small molecules and the active, nuclear transport receptor-mediated bidirectional transport of macromolecules such as proteins, RNAs, ribonucleoparticles (RNPs), and ribosomal subunits across the nuclear envelope. Due to its 8-fold rotational symmetry, all subunits are present with 8 copies or multiples thereof.

The protein resides in the nucleus. The protein localises to the nuclear pore complex. Its subcellular location is the nucleus membrane. It localises to the cytoplasm. It is found in the cytoskeleton. The protein resides in the microtubule organizing center. The protein localises to the spindle pole body. Functionally, component of the nuclear pore complex (NPC) and the spindle pole body (SPB), which plays a key role in de novo assembly and insertion of both structures in the nuclear envelope. Involved in the formation of the bipolar mitotic spindle. Anchors the spindle pole body in the nuclear envelope. This chain is Nuclear envelope protein ndc1 (cut11), found in Schizosaccharomyces pombe (strain 972 / ATCC 24843) (Fission yeast).